A 103-amino-acid chain; its full sequence is MIGKEVTVQDFTLELSELQPEVLPVDLLCEEELPNEQETEEESDIDRTVFKIIAPCGCSSCEVNLRIFVNATDTGIRTLQDLLISDLQLLCPECRGNCKHGGF.

The segment at 1-47 (MIGKEVTVQDFTLELSELQPEVLPVDLLCEEELPNEQETEEESDIDR) is E7 terminal domain. An LXCXE motif; interaction with host RB1 and TMEM173/STING motif is present at residues 27–31 (LLCEE). A zinc finger lies at 56–94 (CGCSSCEVNLRIFVNATDTGIRTLQDLLISDLQLLCPEC). The Nuclear export signal signature appears at 76 to 84 (IRTLQDLLI).

Belongs to the papillomaviridae E7 protein family. In terms of assembly, homodimer. Homooligomer. Interacts with host RB1; this interaction induces dissociation of RB1-E2F1 complex thereby disrupting RB1 activity. Interacts with host EP300; this interaction represses EP300 transcriptional activity. Interacts with protein E2; this interaction inhibits E7 oncogenic activity. Interacts with host TMEM173/STING; this interaction impairs the ability of TMEM173/STING to sense cytosolic DNA and promote the production of type I interferon (IFN-alpha and IFN-beta). Highly phosphorylated.

The protein localises to the host cytoplasm. It is found in the host nucleus. Plays a role in viral genome replication by driving entry of quiescent cells into the cell cycle. Stimulation of progression from G1 to S phase allows the virus to efficiently use the cellular DNA replicating machinery to achieve viral genome replication. E7 protein has both transforming and trans-activating activities. Induces the disassembly of the E2F1 transcription factor from RB1, with subsequent transcriptional activation of E2F1-regulated S-phase genes. Interferes with host histone deacetylation mediated by HDAC1 and HDAC2, leading to transcription activation. Also plays a role in the inhibition of both antiviral and antiproliferative functions of host interferon alpha. Interaction with host TMEM173/STING impairs the ability of TMEM173/STING to sense cytosolic DNA and promote the production of type I interferon (IFN-alpha and IFN-beta). The chain is Protein E7 from Homo sapiens (Human).